An 802-amino-acid chain; its full sequence is Aldehyde dehydrogenase family 16 member A1 (802 aa).

The disordered stretch occupies residues 513-554; that stretch reads SLPSGPETGPSPAPPYGLFVRGRFQSPGTQSSRPIKDSSGKV.

Belongs to the aldehyde dehydrogenase family. As to quaternary structure, interacts with SPG21.

This Rattus norvegicus (Rat) protein is Aldehyde dehydrogenase family 16 member A1 (Aldh16a1).